Consider the following 567-residue polypeptide: WD repeat-containing protein 20 (567 aa).

N-acetylalanine is present on alanine 2. WD repeat units follow at residues 147 to 187 (IDKS…GTTA), 216 to 257 (VGEG…GTMK), 258 to 297 (SYFGGLLCLCWSPDGKYIVTGGEDDLVTVWSFLDCRVIAR), and 345 to 389 (STQS…LFPH). Phosphoserine occurs at positions 355 and 358. The tract at residues 408–441 (PAGSNGSAVTTPGNSVPPPLPRSNSLPHSAVSNA) is disordered. Polar residues-rich tracts occupy residues 411–421 (SNGSAVTTPGN) and 429–441 (RSNSLPHSAVSNA). 3 positions are modified to phosphoserine: serine 430, serine 432, and serine 463. Over residues 468 to 481 (KERHHEKDRKRNHS) the composition is skewed to basic residues. The disordered stretch occupies residues 468–493 (KERHHEKDRKRNHSMGHISSKSSDKL). The stretch at 529 to 566 (IAHERLTVLVFLEDCIVTACQEGFICTWARPGKVSKFQ) is one WD 5 repeat.

As to quaternary structure, interacts with USP12; promotes translocation of USP12/WDR20 to the plasma membrane. Component of the USP12/WDR20/WDR48 deubiquitinating complex. Interacts with USP46; contributes to the cytoplasmic localization of the USP46/WDR20 complex. Component of the USP12/DMWD/WDR48 deubiquitinating complex.

The protein resides in the cytoplasm. Its subcellular location is the nucleus. In terms of biological role, regulator of deubiquitinating complexes. Activates deubiquitinating activity of complexes containing USP12. Anchors at the base of the ubiquitin-contacting loop of USP12 and remotely modulates the catalytic center of the enzyme. Regulates shuttling of complexes containing USP12 between the plasma membrane, cytoplasm and nucleus. The polypeptide is WD repeat-containing protein 20 (Wdr20) (Mus musculus (Mouse)).